The following is a 685-amino-acid chain: DNA ligase (685 aa).

Residues 47–51 (DSEYD), 96–97 (SL), and E125 each bind NAD(+). K127 acts as the N6-AMP-lysine intermediate in catalysis. Positions 148, 185, 304, and 328 each coordinate NAD(+). C422, C425, C440, and C446 together coordinate Zn(2+). Residues 605–685 (AEAQPLKGQT…ELLALLAANA (81 aa)) form the BRCT domain.

The protein belongs to the NAD-dependent DNA ligase family. LigA subfamily. It depends on Mg(2+) as a cofactor. Mn(2+) serves as cofactor.

The enzyme catalyses NAD(+) + (deoxyribonucleotide)n-3'-hydroxyl + 5'-phospho-(deoxyribonucleotide)m = (deoxyribonucleotide)n+m + AMP + beta-nicotinamide D-nucleotide.. Functionally, DNA ligase that catalyzes the formation of phosphodiester linkages between 5'-phosphoryl and 3'-hydroxyl groups in double-stranded DNA using NAD as a coenzyme and as the energy source for the reaction. It is essential for DNA replication and repair of damaged DNA. This is DNA ligase from Shewanella baltica (strain OS223).